The sequence spans 314 residues: Methionyl-tRNA formyltransferase (314 aa).

Residue 113-116 coordinates (6S)-5,6,7,8-tetrahydrofolate; the sequence is SLLP.

It belongs to the Fmt family.

The catalysed reaction is L-methionyl-tRNA(fMet) + (6R)-10-formyltetrahydrofolate = N-formyl-L-methionyl-tRNA(fMet) + (6S)-5,6,7,8-tetrahydrofolate + H(+). Its function is as follows. Attaches a formyl group to the free amino group of methionyl-tRNA(fMet). The formyl group appears to play a dual role in the initiator identity of N-formylmethionyl-tRNA by promoting its recognition by IF2 and preventing the misappropriation of this tRNA by the elongation apparatus. In Chlorobaculum tepidum (strain ATCC 49652 / DSM 12025 / NBRC 103806 / TLS) (Chlorobium tepidum), this protein is Methionyl-tRNA formyltransferase.